We begin with the raw amino-acid sequence, 374 residues long: Probable dual-specificity RNA methyltransferase RlmN (374 aa).

Glu-108 acts as the Proton acceptor in catalysis. Residues 114–361 (YSDRNTVCIS…SCTVRDTRGR (248 aa)) form the Radical SAM core domain. Cys-121 and Cys-367 form a disulfide bridge. Residues Cys-128, Cys-132, and Cys-135 each contribute to the [4Fe-4S] cluster site. Residues 188–189 (GE), Ser-222, 245–247 (SLH), and Asn-324 each bind S-adenosyl-L-methionine. Cys-367 serves as the catalytic S-methylcysteine intermediate.

The protein belongs to the radical SAM superfamily. RlmN family. [4Fe-4S] cluster serves as cofactor.

Its subcellular location is the cytoplasm. The catalysed reaction is adenosine(2503) in 23S rRNA + 2 reduced [2Fe-2S]-[ferredoxin] + 2 S-adenosyl-L-methionine = 2-methyladenosine(2503) in 23S rRNA + 5'-deoxyadenosine + L-methionine + 2 oxidized [2Fe-2S]-[ferredoxin] + S-adenosyl-L-homocysteine. It carries out the reaction adenosine(37) in tRNA + 2 reduced [2Fe-2S]-[ferredoxin] + 2 S-adenosyl-L-methionine = 2-methyladenosine(37) in tRNA + 5'-deoxyadenosine + L-methionine + 2 oxidized [2Fe-2S]-[ferredoxin] + S-adenosyl-L-homocysteine. Its function is as follows. Specifically methylates position 2 of adenine 2503 in 23S rRNA and position 2 of adenine 37 in tRNAs. This Mycobacterium sp. (strain JLS) protein is Probable dual-specificity RNA methyltransferase RlmN.